Here is a 166-residue protein sequence, read N- to C-terminus: Crossover junction endodeoxyribonuclease RuvC (166 aa).

Residues aspartate 11, glutamate 70, and aspartate 142 contribute to the active site. Residues aspartate 11, glutamate 70, and aspartate 142 each coordinate Mg(2+).

It belongs to the RuvC family. As to quaternary structure, homodimer which binds Holliday junction (HJ) DNA. The HJ becomes 2-fold symmetrical on binding to RuvC with unstacked arms; it has a different conformation from HJ DNA in complex with RuvA. In the full resolvosome a probable DNA-RuvA(4)-RuvB(12)-RuvC(2) complex forms which resolves the HJ. Requires Mg(2+) as cofactor.

Its subcellular location is the cytoplasm. It catalyses the reaction Endonucleolytic cleavage at a junction such as a reciprocal single-stranded crossover between two homologous DNA duplexes (Holliday junction).. The RuvA-RuvB-RuvC complex processes Holliday junction (HJ) DNA during genetic recombination and DNA repair. Endonuclease that resolves HJ intermediates. Cleaves cruciform DNA by making single-stranded nicks across the HJ at symmetrical positions within the homologous arms, yielding a 5'-phosphate and a 3'-hydroxyl group; requires a central core of homology in the junction. The consensus cleavage sequence is 5'-(A/T)TT(C/G)-3'. Cleavage occurs on the 3'-side of the TT dinucleotide at the point of strand exchange. HJ branch migration catalyzed by RuvA-RuvB allows RuvC to scan DNA until it finds its consensus sequence, where it cleaves and resolves the cruciform DNA. The polypeptide is Crossover junction endodeoxyribonuclease RuvC (Nitratidesulfovibrio vulgaris (strain DP4) (Desulfovibrio vulgaris)).